The chain runs to 107 residues: uncharacterized protein (107 aa).

This is an uncharacterized protein from Pasteurella multocida (strain Pm70).